The primary structure comprises 205 residues: Red chlorophyll catabolite reductase (205 aa).

E39 and D175 together coordinate substrate.

In terms of assembly, homodimer. Post-translationally, the N-terminus is blocked. In etiolated and green primary leaves. Low amount in roots.

It localises to the plastid. The protein localises to the chloroplast stroma. The enzyme catalyses primary fluorescent chlorophyll catabolite + 2 oxidized [2Fe-2S]-[ferredoxin] = red chlorophyll catabolite + 2 reduced [2Fe-2S]-[ferredoxin] + 3 H(+). It functions in the pathway porphyrin-containing compound metabolism; chlorophyll degradation. Its function is as follows. Catalyzes the key reaction of chlorophyll catabolism, porphyrin macrocycle cleavage of pheophorbide a (pheide a) to a primary fluorescent catabolite (pFCC). Works in a two-step reaction with pheophorbide a oxygenase (PaO) by reducing the C20/C1 double bond of the intermediate, RCC. This chain is Red chlorophyll catabolite reductase (rccR), found in Hordeum vulgare (Barley).